A 95-amino-acid chain; its full sequence is Aspartyl/glutamyl-tRNA(Asn/Gln) amidotransferase subunit C (95 aa).

The protein belongs to the GatC family. Heterotrimer of A, B and C subunits.

It catalyses the reaction L-glutamyl-tRNA(Gln) + L-glutamine + ATP + H2O = L-glutaminyl-tRNA(Gln) + L-glutamate + ADP + phosphate + H(+). The catalysed reaction is L-aspartyl-tRNA(Asn) + L-glutamine + ATP + H2O = L-asparaginyl-tRNA(Asn) + L-glutamate + ADP + phosphate + 2 H(+). Functionally, allows the formation of correctly charged Asn-tRNA(Asn) or Gln-tRNA(Gln) through the transamidation of misacylated Asp-tRNA(Asn) or Glu-tRNA(Gln) in organisms which lack either or both of asparaginyl-tRNA or glutaminyl-tRNA synthetases. The reaction takes place in the presence of glutamine and ATP through an activated phospho-Asp-tRNA(Asn) or phospho-Glu-tRNA(Gln). This chain is Aspartyl/glutamyl-tRNA(Asn/Gln) amidotransferase subunit C, found in Ruthia magnifica subsp. Calyptogena magnifica.